A 103-amino-acid chain; its full sequence is Large ribosomal subunit protein bL21 (103 aa).

This sequence belongs to the bacterial ribosomal protein bL21 family. As to quaternary structure, part of the 50S ribosomal subunit. Contacts protein L20.

In terms of biological role, this protein binds to 23S rRNA in the presence of protein L20. The chain is Large ribosomal subunit protein bL21 from Salmonella paratyphi A (strain ATCC 9150 / SARB42).